Here is a 265-residue protein sequence, read N- to C-terminus: Deoxycytidine kinase 2 (265 aa).

An ATP-binding site is contributed by 31-39 (GNIAAGKST). Substrate is bound by residues Glu56, Tyr89, and Gln100. Glu130 functions as the Proton acceptor in the catalytic mechanism. The substrate site is built by Arg131 and Asp136. 191–195 (RLQKR) contacts ATP. Glu200 is a binding site for substrate. 243-245 (EDF) contacts ATP.

Belongs to the DCK/DGK family. Homodimer. As to expression, expressed at high levels in adult intestine, spleen, thymus and testis with lower levels in skeletal muscle and eye. In the embryo, expressed at higher levels until day 10 with lower levels in later stages.

Its subcellular location is the nucleus. The enzyme catalyses 2'-deoxycytidine + a ribonucleoside 5'-triphosphate = dCMP + a ribonucleoside 5'-diphosphate + H(+). It catalyses the reaction 2'-deoxyguanosine + ATP = dGMP + ADP + H(+). It carries out the reaction 2'-deoxyadenosine + ATP = dAMP + ADP + H(+). Its function is as follows. Phosphorylates the deoxyribonucleosides deoxyadenosine, deoxycytidine and deoxyguanosine. Shows highest activity against deoxyguanosine followed by deoxycytidine and then deoxyadenosine. Shows only very minor activity against deoxyuridine and deoxythymidine. This chain is Deoxycytidine kinase 2, found in Gallus gallus (Chicken).